The chain runs to 268 residues: Phosphatidylglycerol--prolipoprotein diacylglyceryl transferase (268 aa).

Transmembrane regions (helical) follow at residues 14 to 34 (LGPI…FAGW), 57 to 77 (LTFY…IIFY), 90 to 110 (FFLW…LIAF), and 117 to 137 (IGAN…IGLG). Position 140 (Arg140) interacts with a 1,2-diacyl-sn-glycero-3-phospho-(1'-sn-glycerol). 3 helical membrane passes run 174–194 (QLFE…LVTI), 200–220 (YLVL…CEFF), and 238–258 (GQIL…AVFI).

The protein belongs to the Lgt family.

The protein localises to the cell inner membrane. It catalyses the reaction L-cysteinyl-[prolipoprotein] + a 1,2-diacyl-sn-glycero-3-phospho-(1'-sn-glycerol) = an S-1,2-diacyl-sn-glyceryl-L-cysteinyl-[prolipoprotein] + sn-glycerol 1-phosphate + H(+). It participates in protein modification; lipoprotein biosynthesis (diacylglyceryl transfer). Its function is as follows. Catalyzes the transfer of the diacylglyceryl group from phosphatidylglycerol to the sulfhydryl group of the N-terminal cysteine of a prolipoprotein, the first step in the formation of mature lipoproteins. In Francisella tularensis subsp. novicida (strain U112), this protein is Phosphatidylglycerol--prolipoprotein diacylglyceryl transferase.